The primary structure comprises 132 residues: Small heat shock protein hspL (132 aa).

A sHSP domain is found at 15-131 (TFTNFVSAPV…VKMSNNNKVE (117 aa)).

It belongs to the small heat shock protein (HSP20) family.

In Dictyostelium discoideum (Social amoeba), this protein is Small heat shock protein hspL (hspL).